We begin with the raw amino-acid sequence, 353 residues long: Peptide-N(4)-(N-acetyl-beta-glucosaminyl)asparagine amidase (353 aa).

3 residues coordinate Zn(2+): Cys125, Cys128, and Cys159. The active-site Nucleophile is Cys185. Active-site residues include His212 and Asp229. Glu232 contacts substrate. Residues 316–353 (SLEKTKPSKDTSTTTLTGTKGRESGSTAWKQQRGEDGS) are disordered. Low complexity predominate over residues 325–334 (DTSTTTLTGT).

The protein belongs to the transglutaminase-like superfamily. PNGase family. Zn(2+) is required as a cofactor.

The protein resides in the cytoplasm. It catalyses the reaction Hydrolysis of an N(4)-(acetyl-beta-D-glucosaminyl)asparagine residue in which the glucosamine residue may be further glycosylated, to yield a (substituted) N-acetyl-beta-D-glucosaminylamine and a peptide containing an aspartate residue.. Its function is as follows. Specifically deglycosylates the denatured form of N-linked glycoproteins in the cytoplasm and assists their proteasome-mediated degradation. Cleaves the beta-aspartyl-glucosamine (GlcNAc) of the glycan and the amide side chain of Asn, converting Asn to Asp. Prefers proteins containing high-mannose over those bearing complex type oligosaccharides. Can recognize misfolded proteins in the endoplasmic reticulum that are exported to the cytosol to be destroyed and deglycosylate them, while it has no activity toward native proteins. Deglycosylation is a prerequisite for subsequent proteasome-mediated degradation of some, but not all, misfolded glycoproteins. The protein is Peptide-N(4)-(N-acetyl-beta-glucosaminyl)asparagine amidase (PNG1) of Kluyveromyces lactis (strain ATCC 8585 / CBS 2359 / DSM 70799 / NBRC 1267 / NRRL Y-1140 / WM37) (Yeast).